The chain runs to 211 residues: Metalloproteinase inhibitor 3 (211 aa).

Positions 1-23 are cleaved as a signal peptide; the sequence is MTPWLGLVVLLSCWSLGHWGAEA. Residue cysteine 24 coordinates Zn(2+). Involved in metalloproteinase-binding stretches follow at residues 24–27 and 88–89; these read CTCS and ES. 6 disulfide bridges follow: cysteine 24-cysteine 91, cysteine 26-cysteine 118, cysteine 36-cysteine 143, cysteine 145-cysteine 192, cysteine 150-cysteine 155, and cysteine 163-cysteine 184. The region spanning 24-143 is the NTR domain; the sequence is CTCSPSHPQD…GLNYRYHLGC (120 aa). The interval 105–188 is mediates interaction with EFEMP1; sequence TGRVYEGKMY…SKHYACIRQK (84 aa).

It belongs to the protease inhibitor I35 (TIMP) family. In terms of assembly, interacts with EFEMP1. Interacts with KDR. Highest levels are found in kidney, lung and brain followed by ovary and uterus. Low levels are found in bone.

The protein resides in the secreted. It is found in the extracellular space. It localises to the extracellular matrix. In terms of biological role, mediates a variety of processes including matrix regulation and turnover, inflammation, and angiogenesis, through reversible inhibition of zinc protease superfamily enzymes, primarily matrix metalloproteinases (MMPs). Regulates extracellular matrix (ECM) remodeling through inhibition of matrix metalloproteinases (MMP) including MMP-1, MMP-2, MMP-3, MMP-7, MMP-9, MMP-13, MMP-14 and MMP-15. Additionally, modulates the processing of amyloid precursor protein (APP) and apolipoprotein E receptor ApoER2 by inhibiting two alpha-secretases ADAM10 and ADAM17. Functions as a tumor suppressor and a potent inhibitor of angiogenesis. Exerts its anti-angiogenic effect by directly interacting with vascular endothelial growth factor (VEGF) receptor-2/KDR, preventing its binding to the VEGFA ligand. Selectively induces apoptosis in angiogenic endothelial cells through a caspase-independent cell death pathway. Mechanistically, inhibits matrix-induced focal adhesion kinase PTK2 tyrosine phosphorylation and association with paxillin/PXN and disrupts the incorporation of ITGB3, PTK2 and PXN into focal adhesion contacts on the matrix. In Mus musculus (Mouse), this protein is Metalloproteinase inhibitor 3 (Timp3).